Here is a 510-residue protein sequence, read N- to C-terminus: Solute carrier family 2, facilitated glucose transporter member 2 (510 aa).

The Cytoplasmic segment spans residues 1–10; it reads MTEDKVTGTL. Residues 11–31 form a helical membrane-spanning segment; it reads VLAVFTAVLSSFQFGYDIGVI. Residues 32–96 are Extracellular-facing; that stretch reads NAPQQVIITH…SASLITMFWS (65 aa). Residue N62 is glycosylated (N-linked (GlcNAc...) asparagine). The chain crosses the membrane as a helical span at residues 97 to 117; the sequence is LSVSSFAVGGMIASFFGGLLG. The Cytoplasmic segment spans residues 118 to 122; it reads DKLGR. A helical membrane pass occupies residues 123 to 143; that stretch reads IKALLVANILSLVGALLMGFS. The Extracellular portion of the chain corresponds to 144–157; that stretch reads KLGPSHILIISGRG. The chain crosses the membrane as a helical span at residues 158–178; sequence ISGLYCGLISGLIPMYIGEIA. Residues 179-191 lie on the Cytoplasmic side of the membrane; it reads PTTLRGAIGALHQ. Position 191 (Q191) interacts with D-glucose. The chain crosses the membrane as a helical span at residues 192–212; that stretch reads LAIVTGILISQIVGLDFILGN. Residues 213 to 215 are Extracellular-facing; sequence HEL. The chain crosses the membrane as a helical span at residues 216 to 236; it reads WHILLGLSAVPAILQCLLLFF. At 237-301 the chain is on the cytoplasmic side; the sequence is CPESPRYLYI…LFTNASYRQP (65 aa). The helical transmembrane segment at 302-322 threads the bilayer; that stretch reads ILVALMLHAAQQFSGINGIFY. D-glucose-binding positions include 312 to 313 and N318; that span reads QQ. Residues 323–336 are Extracellular-facing; sequence YSTSIFQTAGISQP. The chain crosses the membrane as a helical span at residues 337-357; that stretch reads VYATIGVGAVNTVFTAVSVFL. N347 is a binding site for D-glucose. Residues 358–365 are Cytoplasmic-facing; sequence VEKAGRRS. Residues 366-386 traverse the membrane as a helical segment; it reads LFLIGMSGMFVCAIFMSVGLV. The Extracellular segment spans residues 387 to 400; that stretch reads LLSKFPWMNYVSMT. A helical membrane pass occupies residues 401–421; sequence AIFLFVSFFEIGPGPIPWFMV. E410 and W418 together coordinate D-glucose. Topologically, residues 422–431 are cytoplasmic; that stretch reads AEFFSQGPRP. A helical transmembrane segment spans residues 432–452; it reads AALAIAAFSNWTGNFIIALCF. Topologically, residues 453–454 are extracellular; the sequence is QY. Residues 455-475 form a helical membrane-spanning segment; it reads IADFCGPYVFFLLLVWSWPLF. At 476 to 510 the chain is on the cytoplasmic side; it reads CSHFLKFQKPKENPLRKSQQSSERRGVQLKRQKLL. The disordered stretch occupies residues 490–510; it reads LRKSQQSSERRGVQLKRQKLL.

The protein belongs to the major facilitator superfamily. Sugar transporter (TC 2.A.1.1) family. Glucose transporter subfamily. In terms of processing, N-glycosylated; required for stability and retention at the cell surface of pancreatic beta cells.

The protein resides in the cell membrane. The catalysed reaction is D-glucose(out) = D-glucose(in). The enzyme catalyses D-fructose(out) = D-fructose(in). It catalyses the reaction L-dehydroascorbate(out) = L-dehydroascorbate(in). It carries out the reaction D-galactose(in) = D-galactose(out). Its activity is regulated as follows. D-glucose and maltose competitively inhibit fructose transport. D-glucose, D-fructose and maltose inhibit deoxyglucose transport. Functionally, facilitative hexose transporter that mediates the transport of glucose, fructose and galactose. Likely mediates the bidirectional transfer of glucose across the plasma membrane of hepatocytes and is responsible for uptake of glucose by the beta cells; may comprise part of the glucose-sensing mechanism of the beta cell. May also participate with the Na(+)/glucose cotransporter in the transcellular transport of glucose in the small intestine and kidney. Also able to mediate the transport of dehydroascorbate. The protein is Solute carrier family 2, facilitated glucose transporter member 2 of Bos taurus (Bovine).